The sequence spans 155 residues: Large ribosomal subunit protein eL24 (155 aa).

Residues 94-129 show a composition bias toward basic and acidic residues; it reads RSLKPEVRKAQRDEKKKADKEKKKADKAARKSEKAK. Residues 94-155 form a disordered region; it reads RSLKPEVRKA…AFQKVAATSR (62 aa).

Belongs to the eukaryotic ribosomal protein eL24 family.

This is Large ribosomal subunit protein eL24 (RPL24) from Kluyveromyces lactis (strain ATCC 8585 / CBS 2359 / DSM 70799 / NBRC 1267 / NRRL Y-1140 / WM37) (Yeast).